The chain runs to 1252 residues: Calmodulin-regulated spectrin-associated protein 3 (1252 aa).

9 disordered regions span residues 183 to 205 (KTEQ…SPAQ), 331 to 385 (HAVS…SMSH), 429 to 457 (SVSS…ESGD), 479 to 604 (GAAD…MSEL), 638 to 697 (FLQV…LGDY), 712 to 935 (QRDM…EAAR), 962 to 981 (TTRA…GDFT), 996 to 1030 (DLDK…DDSA), and 1063 to 1114 (PNNL…TGPR). Phosphothreonine is present on Thr-184. At Ser-193 the chain carries Phosphoserine. Positions 203 to 312 (PAQPSIRYRK…LVVLLAEMYM (110 aa)) constitute a Calponin-homology (CH) domain. Residues Ser-334, Ser-347, Ser-351, Ser-368, Ser-373, and Ser-382 each carry the phosphoserine modification. Residues 335 to 353 (PRNTETVPSQNNSGSSSPV) show a composition bias toward polar residues. The span at 359-373 (PLLSPGGPQSPLRGS) shows a compositional bias: low complexity. 3 stretches are compositionally biased toward polar residues: residues 374–383 (TGSLKSSPSM), 441–450 (VSTSSRNSAQ), and 525–534 (ENPSKSSPCS). Phosphoserine is present on residues Ser-548, Ser-555, and Ser-561. Residues 569–580 (AERKKQLVKAEA) show a composition bias toward basic and acidic residues. A coiled-coil region spans residues 595–629 (EALSSEMSELGARLEEKRRAIEAQKRRIEAIFAKH). Position 683 is a phosphoserine (Ser-683). Residues 696-727 (DYNRAVSKLSAALSSLQRDMQRLTDQQQRLLA) are a coiled coil. Pro residues predominate over residues 729 to 739 (PEAPGPAPPPA). Over residues 740-768 (AWVIPGPATGPKAASPSPARRAPAARRSP) the composition is skewed to low complexity. Ser-767 is modified (phosphoserine). Thr-797 carries the phosphothreonine modification. Residues Ser-812 and Ser-881 each carry the phosphoserine modification. A compositionally biased stretch (polar residues) spans 812–825 (SPSQVPVQTRSSIL). A compositionally biased stretch (basic and acidic residues) spans 887 to 934 (YKDEDKPEDEMAQKRASLLERQQRRVEEARRRKQWQEAEKEQKREEAA). Positions 896 to 943 (EMAQKRASLLERQQRRVEEARRRKQWQEAEKEQKREEAARLAQEAPGL) form a coiled coil. At Ser-1077 the chain carries Phosphoserine. The region spanning 1112 to 1246 (GPRLYKEPSA…QSKKPTTPKK (135 aa)) is the CKK domain.

The protein belongs to the CAMSAP1 family. As to quaternary structure, interacts with PLEKHA7. Interacts with CAMSAP2. Interacts with KATNA1 and KATNB1; leading to regulate the length of CAMSAP3-decorated microtubule stretches. Interacts with AKAP9; regulating Golgi assembly in epithelial cells. Interacts with MACF1. Interacts with isoform C of CDH23; leading to inhibit CAMSAP3 ability to induce microtubule bundle formation. Interacts with AKNA. Expressed at the apical surface of respiratory epithelia, as well as in the acini of submucosal glands (at protein level). In cochlea, restricted to the organ of Corti and increases during development (at protein level). Highly expressed in both sensory hair cells and supporting cells.

It is found in the cytoplasm. It localises to the cytoskeleton. Its subcellular location is the cell junction. The protein resides in the adherens junction. The protein localises to the cilium axoneme. It is found in the cilium basal body. In terms of biological role, key microtubule-organizing protein that specifically binds the minus-end of non-centrosomal microtubules and regulates their dynamics and organization. Specifically recognizes growing microtubule minus-ends and autonomously decorates and stabilizes microtubule lattice formed by microtubule minus-end polymerization. Acts on free microtubule minus-ends that are not capped by microtubule-nucleating proteins or other factors and protects microtubule minus-ends from depolymerization. In addition, it also reduces the velocity of microtubule polymerization. Required for the biogenesis and the maintenance of zonula adherens by anchoring the minus-end of microtubules to zonula adherens and by recruiting the kinesin KIFC3 to those junctional sites. Required for orienting the apical-to-basal polarity of microtubules in epithelial cells: acts by tethering non-centrosomal microtubules to the apical cortex, leading to their longitudinal orientation. Plays a key role in early embryos, which lack centrosomes: accumulates at the microtubule bridges that connect pairs of cells and enables the formation of a non-centrosomal microtubule-organizing center that directs intracellular transport in the early embryo. Couples non-centrosomal microtubules with actin: interaction with MACF1 at the minus ends of non-centrosomal microtubules, tethers the microtubules to actin filaments, regulating focal adhesion size and cell migration. Plays a key role in the generation of non-centrosomal microtubules by accumulating in the pericentrosomal region and cooperating with KATNA1 to release non-centrosomal microtubules from the centrosome. Through the microtubule cytoskeleton, also regulates the organization of cellular organelles including the Golgi and the early endosomes. Through interaction with AKAP9, involved in translocation of Golgi vesicles in epithelial cells, where microtubules are mainly non-centrosomal. Plays an important role in motile cilia function by facilitatating proper orientation of basal bodies and formation of central microtubule pairs in motile cilia. The protein is Calmodulin-regulated spectrin-associated protein 3 of Mus musculus (Mouse).